Here is a 343-residue protein sequence, read N- to C-terminus: Large ribosomal subunit protein uL3 (343 aa).

Disordered regions lie at residues 1 to 31 (MGHRKLASPRRGSAGVRPRKRASEILPTPRS) and 238 to 262 (KGSRKVGARGPSFSTPSYVPQPGQM).

Belongs to the universal ribosomal protein uL3 family. In terms of assembly, part of the 50S ribosomal subunit. Forms a cluster with proteins L14 and L24e.

In terms of biological role, one of the primary rRNA binding proteins, it binds directly near the 3'-end of the 23S rRNA, where it nucleates assembly of the 50S subunit. In Sulfurisphaera tokodaii (strain DSM 16993 / JCM 10545 / NBRC 100140 / 7) (Sulfolobus tokodaii), this protein is Large ribosomal subunit protein uL3.